Consider the following 1317-residue polypeptide: DNA-directed RNA polymerase subunit beta' (1317 aa).

Residues C214, C286, C293, and C296 each coordinate Zn(2+). Residues 1279–1317 form a disordered region; the sequence is RAYAGTQLSQDDEEFEETYDTDEDDFDMDDDDDFGDDED. The segment covering 1288–1317 has biased composition (acidic residues); it reads QDDEEFEETYDTDEDDFDMDDDDDFGDDED.

The protein belongs to the RNA polymerase beta' chain family. RpoC2 subfamily. As to quaternary structure, in cyanobacteria the RNAP catalytic core is composed of 2 alpha, 1 beta, 1 beta', 1 gamma and 1 omega subunit. When a sigma factor is associated with the core the holoenzyme is formed, which can initiate transcription. It depends on Zn(2+) as a cofactor.

The enzyme catalyses RNA(n) + a ribonucleoside 5'-triphosphate = RNA(n+1) + diphosphate. Functionally, DNA-dependent RNA polymerase catalyzes the transcription of DNA into RNA using the four ribonucleoside triphosphates as substrates. In Synechocystis sp. (strain ATCC 27184 / PCC 6803 / Kazusa), this protein is DNA-directed RNA polymerase subunit beta'.